Consider the following 194-residue polypeptide: uncharacterized protein (194 aa).

The protein belongs to the calycin superfamily. Fatty-acid binding protein (FABP) family.

This is an uncharacterized protein from Caenorhabditis elegans.